The chain runs to 200 residues: NAD(P)H dehydrogenase (quinone) (200 aa).

A Flavodoxin-like domain is found at 4 to 191; it reads VLVLYYSMYG…DIARFQGKHV (188 aa). FMN-binding positions include 10–15 and 79–81; these read SMYGHI and TRF. Tyr-12 provides a ligand contact to NAD(+). A substrate-binding site is contributed by Trp-99. FMN contacts are provided by residues 114–120 and His-135; that span reads STGTQHG.

It belongs to the WrbA family. FMN is required as a cofactor.

It catalyses the reaction a quinone + NADH + H(+) = a quinol + NAD(+). It carries out the reaction a quinone + NADPH + H(+) = a quinol + NADP(+). The chain is NAD(P)H dehydrogenase (quinone) from Paraburkholderia phytofirmans (strain DSM 17436 / LMG 22146 / PsJN) (Burkholderia phytofirmans).